A 115-amino-acid chain; its full sequence is MQPKSISLLQKIDSIIETIIVKFTNIFENLQDANKTTEILSMESLAMENNCIQIIRLCQDLISISRNLKEIWVLNSIKVTQEKFEWKQEEIDIMFTQFNLLTDKIAEFETDMNKE.

Belongs to the Mediator complex subunit 22 family. As to quaternary structure, component of the Mediator complex.

The protein localises to the nucleus. In terms of biological role, component of the Mediator complex, a coactivator involved in the regulated transcription of nearly all RNA polymerase II-dependent genes. Mediator functions as a bridge to convey information from gene-specific regulatory proteins to the basal RNA polymerase II transcription machinery. Mediator is recruited to promoters by direct interactions with regulatory proteins and serves as a scaffold for the assembly of a functional preinitiation complex with RNA polymerase II and the general transcription factors. This Candida albicans (strain SC5314 / ATCC MYA-2876) (Yeast) protein is Mediator of RNA polymerase II transcription subunit 22 (SRB6).